The primary structure comprises 238 residues: Ribonuclease 3 (238 aa).

The RNase III domain maps to 4–134; sequence PRQALLDAFG…LLGAIYLHHG (131 aa). Residue E44 coordinates Mg(2+). The active site involves D48. 2 residues coordinate Mg(2+): D120 and E123. E123 is a catalytic residue. In terms of domain architecture, DRBM spans 161–229; sequence DWKTSLQELT…ASAAWKALDV (69 aa).

It belongs to the ribonuclease III family. In terms of assembly, homodimer. Mg(2+) is required as a cofactor.

The protein localises to the cytoplasm. It catalyses the reaction Endonucleolytic cleavage to 5'-phosphomonoester.. Digests double-stranded RNA. Involved in the processing of primary rRNA transcript to yield the immediate precursors to the large and small rRNAs (23S and 16S). Processes some mRNAs, and tRNAs when they are encoded in the rRNA operon. Processes pre-crRNA and tracrRNA of type II CRISPR loci if present in the organism. The polypeptide is Ribonuclease 3 (Mycobacterium leprae (strain TN)).